Here is a 716-residue protein sequence, read N- to C-terminus: Putative mannosyltransferase YkcB (716 aa).

8 helical membrane passes run 8–28 (LDIVLLLILLASAFLNIYNIW), 44–64 (MMQSFHNFFYASFDAAGFITV), 87–107 (SVILPQALAGVGSVLLMYLLI), 118–135 (IASFVMACTPIAVAVART), 137–157 (NVDALLVFFLLLATWLLFKAI), 159–179 (KGKLIWLLAAFFVVGVGFNTK), 180–200 (MLQAYMILPAFLLFYLIAANA), and 206–226 (IVSLVSALAVLAAVSLSWPLI). Residues 260 to 363 (TGQNSGGGQG…GSGMFGTGTP (104 aa)) are disordered. Residues 278 to 289 (EMSSSDNTQAPP) show a composition bias toward polar residues. Residues 290 to 307 (NQSSSNSSSSDGKSSNGN) are compositionally biased toward low complexity. A compositionally biased stretch (gly residues) spans 318-347 (PSGGQGGPPSGGDGGQGGPGGDGGKGGTGT). 6 consecutive transmembrane segments (helical) span residues 376-396 (QISWLLPFAIFGIAGLLIAGA), 409-429 (TVFWVAWLVPIAGFFSVAEFF), 433-453 (YLIMLAPPIAALVGAGWVALV), 462-482 (WKAWLLPGAIIATTGFELFIL), 491-511 (VGWSIGVGVIGVLSAIALLLF), and 518-538 (FSYYVSLAALLALLVMPMYWA). The segment at 664–716 (VASEKWQSSSDQKTENTDSADTSSSKASGENGKMGGPGGMNQSATLYELHADE) is disordered. The segment covering 680 to 694 (TDSADTSSSKASGEN) has biased composition (low complexity).

This sequence belongs to the glycosyltransferase 39 family.

Its subcellular location is the cell membrane. The sequence is that of Putative mannosyltransferase YkcB (ykcB) from Bacillus subtilis (strain 168).